The chain runs to 497 residues: Proline--tRNA ligase (497 aa).

It belongs to the class-II aminoacyl-tRNA synthetase family. ProS type 3 subfamily. As to quaternary structure, homodimer.

It localises to the cytoplasm. The enzyme catalyses tRNA(Pro) + L-proline + ATP = L-prolyl-tRNA(Pro) + AMP + diphosphate. Its function is as follows. Catalyzes the attachment of proline to tRNA(Pro) in a two-step reaction: proline is first activated by ATP to form Pro-AMP and then transferred to the acceptor end of tRNA(Pro). In Bacteroides fragilis (strain ATCC 25285 / DSM 2151 / CCUG 4856 / JCM 11019 / LMG 10263 / NCTC 9343 / Onslow / VPI 2553 / EN-2), this protein is Proline--tRNA ligase.